The sequence spans 196 residues: Glycerol-3-phosphate acyltransferase (196 aa).

Transmembrane regions (helical) follow at residues 4 to 24 (IYIA…GLIL), 70 to 90 (VLIA…LGAF), 111 to 131 (IGVL…LWLA), and 152 to 172 (IFLW…LTLL).

Belongs to the PlsY family. As to quaternary structure, probably interacts with PlsX.

Its subcellular location is the cell inner membrane. The enzyme catalyses an acyl phosphate + sn-glycerol 3-phosphate = a 1-acyl-sn-glycero-3-phosphate + phosphate. The protein operates within lipid metabolism; phospholipid metabolism. Its function is as follows. Catalyzes the transfer of an acyl group from acyl-phosphate (acyl-PO(4)) to glycerol-3-phosphate (G3P) to form lysophosphatidic acid (LPA). This enzyme utilizes acyl-phosphate as fatty acyl donor, but not acyl-CoA or acyl-ACP. This is Glycerol-3-phosphate acyltransferase from Rhodopseudomonas palustris (strain BisB5).